Consider the following 364-residue polypeptide: UDP-N-acetylglucosamine--N-acetylmuramyl-(pentapeptide) pyrophosphoryl-undecaprenol N-acetylglucosamine transferase (364 aa).

UDP-N-acetyl-alpha-D-glucosamine-binding positions include 10–12, N124, R166, S196, I252, and Q297; that span reads TGG.

This sequence belongs to the glycosyltransferase 28 family. MurG subfamily.

It localises to the cell membrane. It carries out the reaction di-trans,octa-cis-undecaprenyl diphospho-N-acetyl-alpha-D-muramoyl-L-alanyl-D-glutamyl-meso-2,6-diaminopimeloyl-D-alanyl-D-alanine + UDP-N-acetyl-alpha-D-glucosamine = di-trans,octa-cis-undecaprenyl diphospho-[N-acetyl-alpha-D-glucosaminyl-(1-&gt;4)]-N-acetyl-alpha-D-muramoyl-L-alanyl-D-glutamyl-meso-2,6-diaminopimeloyl-D-alanyl-D-alanine + UDP + H(+). The protein operates within cell wall biogenesis; peptidoglycan biosynthesis. In terms of biological role, cell wall formation. Catalyzes the transfer of a GlcNAc subunit on undecaprenyl-pyrophosphoryl-MurNAc-pentapeptide (lipid intermediate I) to form undecaprenyl-pyrophosphoryl-MurNAc-(pentapeptide)GlcNAc (lipid intermediate II). This chain is UDP-N-acetylglucosamine--N-acetylmuramyl-(pentapeptide) pyrophosphoryl-undecaprenol N-acetylglucosamine transferase, found in Ruminiclostridium cellulolyticum (strain ATCC 35319 / DSM 5812 / JCM 6584 / H10) (Clostridium cellulolyticum).